Consider the following 512-residue polypeptide: Pantothenate transporter FEN2 (512 aa).

Topologically, residues 1 to 27 (MMKESKSITQHEVERESVSSKRAIKKR) are cytoplasmic. Residues 28 to 48 (LLLFKIDLFVLSFVCLQYWIN) traverse the membrane as a helical segment. At 49–79 (YVDRVGFTNAYISGMKEDLKMVGNDLTVSNT) the chain is on the extracellular side. A helical transmembrane segment spans residues 80–100 (VFMIGYIVGMVPNNLMLLCVP). The Cytoplasmic segment spans residues 101–102 (PR). Residues 103–123 (IWLSFCTFAWGLLTLGMYKVT) traverse the membrane as a helical segment. The Extracellular portion of the chain corresponds to 124–132 (SFKHICAIR). Residues 133–153 (FFQALFESCTFSGTHFVLGSW) form a helical membrane-spanning segment. At 154-164 (YKEDELPIRSA) the chain is on the cytoplasmic side. A helical membrane pass occupies residues 165-185 (IFTGSGLVGSMFSGFMQTSIF). The Extracellular segment spans residues 186–198 (THLNGRNGLAGWR). A helical transmembrane segment spans residues 199–219 (WLFIIDFCITLPIAIYGFIFF). Residues 220–271 (PGLPDQTSAVSKFSMTRYIFNEQELHYARRRLPARDESTRLDWSTIPRVLKR) are Cytoplasmic-facing. Residues 272 to 292 (WHWWMFSLVWVLGGENLGFAS) traverse the membrane as a helical segment. At 293–312 (NSTFALWLQNQKYTLAQRNN) the chain is on the extracellular side. A helical transmembrane segment spans residues 313-333 (YPSGIFAVGIVSTLCSAVYMS). The Cytoplasmic portion of the chain corresponds to 334-342 (KIPRARHWH). Residues 343-363 (VSVFISLVMVIVAVLIRADPL) form a helical membrane-spanning segment. Residues 364-372 (NPKVVFSAQ) lie on the Extracellular side of the membrane. A helical membrane pass occupies residues 373-393 (YLGGVAYAGQAVFFSWANIIC). The Cytoplasmic segment spans residues 394 to 401 (HADLQERA). A helical membrane pass occupies residues 402–422 (IVLASMNMFSGAVNAWWSILF). Over 423 to 434 (FASDMVPKFERG) the chain is Extracellular. The helical transmembrane segment at 435-455 (CYALLATAISSGIVSVVIRSL) threads the bilayer. Topologically, residues 456–512 (QIKENLSKKQVPYIDANDMPGEDDDDDNQDNENDGDDESMEVELHNEEMAEISNPFR) are cytoplasmic. The segment at 468–512 (YIDANDMPGEDDDDDNQDNENDGDDESMEVELHNEEMAEISNPFR) is disordered. The segment covering 475–496 (PGEDDDDDNQDNENDGDDESME) has biased composition (acidic residues).

It belongs to the major facilitator superfamily. Allantoate permease family.

Its subcellular location is the cell membrane. Functionally, transports pantothenate into the cell. Also involved in the catabolite repression-mediated regulation of ergosterol biosynthesis and in fenpropimorph resistance. This is Pantothenate transporter FEN2 (FEN2) from Saccharomyces cerevisiae (strain ATCC 204508 / S288c) (Baker's yeast).